The primary structure comprises 681 residues: DNA ligase (681 aa).

NAD(+)-binding positions include 45-49 (DFDFD), 94-95 (SL), and glutamate 120. Residue lysine 122 is the N6-AMP-lysine intermediate of the active site. 4 residues coordinate NAD(+): arginine 143, glutamate 177, lysine 289, and lysine 313. Zn(2+) contacts are provided by cysteine 403, cysteine 406, cysteine 421, and cysteine 426. The BRCT domain maps to 593 to 681 (ADQQPFAGQS…SLKIDFKNLI (89 aa)).

The protein belongs to the NAD-dependent DNA ligase family. LigA subfamily. It depends on Mg(2+) as a cofactor. Mn(2+) serves as cofactor.

The catalysed reaction is NAD(+) + (deoxyribonucleotide)n-3'-hydroxyl + 5'-phospho-(deoxyribonucleotide)m = (deoxyribonucleotide)n+m + AMP + beta-nicotinamide D-nucleotide.. Functionally, DNA ligase that catalyzes the formation of phosphodiester linkages between 5'-phosphoryl and 3'-hydroxyl groups in double-stranded DNA using NAD as a coenzyme and as the energy source for the reaction. It is essential for DNA replication and repair of damaged DNA. The chain is DNA ligase from Leptospira interrogans serogroup Icterohaemorrhagiae serovar Lai (strain 56601).